We begin with the raw amino-acid sequence, 117 residues long: cAMP-regulated phosphoprotein 19-A (117 aa).

The span at 1–37 (MSGENQETKAQEESSALEQKEIDDKVVSPEKSEEIKL) shows a compositional bias: basic and acidic residues. Residues 1-54 (MSGENQETKAQEESSALEQKEIDDKVVSPEKSEEIKLKARYPNLGPKPGGSDFL) form a disordered region. At Ser-28 the chain carries Phosphoserine; by CDK2. Residue Ser-67 is modified to Phosphoserine; by GWL. A disordered region spans residues 78–117 (KNKQLPTAASDKTEVTGDHIPTPQDLPQRKPSLVASKLAG). Position 99 is a phosphothreonine; by CDK2 (Thr-99). Ser-109 carries the post-translational modification Phosphoserine; by PKA.

The protein belongs to the endosulfine family. As to quaternary structure, interacts (when phosphorylated at Ser-67) with ppp2r2d. Phosphorylation at Ser-67 by gwl during mitosis is essential for interaction with ppp2r2d (PR55-delta) and subsequent inactivation of PP2A. Phosphorylated by PKA.

The protein resides in the cytoplasm. Its function is as follows. Protein phosphatase inhibitor that specifically inhibits protein phosphatase 2A (PP2A) during mitosis. When phosphorylated at Ser-67 during mitosis, specifically interacts with ppp2r2d (PR55-delta) and inhibits its activity, leading to inactivation of PP2A, an essential condition to keep cyclin-B1-CDK1 activity high during M phase. The sequence is that of cAMP-regulated phosphoprotein 19-A (arpp19-a) from Xenopus laevis (African clawed frog).